A 123-amino-acid polypeptide reads, in one-letter code: Protein LLP homolog (123 aa).

Positions 1-21 (MAKSIRSKWKRKMRAEKRKKN) are enriched in basic residues. 2 disordered regions span residues 1 to 23 (MAKS…KNAP) and 55 to 123 (KINE…KLAW). A compositionally biased stretch (basic and acidic residues) spans 70–89 (DSSKMDMELKRNKKNLRDQH). The segment covering 100–123 (QQKKLKSQCGKKKGKSKQAKKLAW) has biased composition (basic residues).

This sequence belongs to the learning-associated protein family.

It localises to the nucleus. The protein localises to the nucleolus. The protein resides in the chromosome. Its function is as follows. Regulates dendritic and spine growth and synaptic transmission. The polypeptide is Protein LLP homolog (llph) (Xenopus tropicalis (Western clawed frog)).